A 172-amino-acid chain; its full sequence is Translationally-controlled tumor protein (172 aa).

Residues 1–172 (MIIYRDLISH…FKDGLEMEKC (172 aa)) enclose the TCTP domain. A phosphoserine mark is found at Ser46 and Ser53. Phosphoserine; by PLK1 is present on Ser64. Residues 70 to 172 (VDIVMNHHLQ…FKDGLEMEKC (103 aa)) are required for reduction of TSC22D1 protein stability.

It belongs to the TCTP family. Homodimer. Interacts with STEAP3. Interacts with TSC22D1; interaction results in the destabilization of TSC22D1 protein.

It is found in the cytoplasm. Its function is as follows. Involved in calcium binding and microtubule stabilization. Acts as a negative regulator of TSC22D1-mediated apoptosis, via interaction with and destabilization of TSC22D1 protein. In Mus musculus (Mouse), this protein is Translationally-controlled tumor protein (Tpt1).